The sequence spans 255 residues: Altered inheritance of mitochondria protein 36, mitochondrial (255 aa).

Residues 1–40 constitute a mitochondrion transit peptide; it reads MLRPLRKSVLASCRHCFKVCGGLPQKQLPLFSPLLLRARY. A helical membrane pass occupies residues 64–82; it reads IFLVAIIGTVIFVKTVQSL.

The protein belongs to the AIM36 family.

Its subcellular location is the mitochondrion membrane. The protein is Altered inheritance of mitochondria protein 36, mitochondrial (AIM36) of Saccharomyces cerevisiae (strain RM11-1a) (Baker's yeast).